Here is a 233-residue protein sequence, read N- to C-terminus: LexA repressor (233 aa).

The H-T-H motif DNA-binding region spans 26 to 46 (FEEMKEALDLKSKSGVHRLIS). Catalysis depends on for autocatalytic cleavage activity residues serine 153 and lysine 191.

Belongs to the peptidase S24 family. As to quaternary structure, homodimer.

It catalyses the reaction Hydrolysis of Ala-|-Gly bond in repressor LexA.. Functionally, represses a number of genes involved in the response to DNA damage (SOS response), including recA and lexA. In the presence of single-stranded DNA, RecA interacts with LexA causing an autocatalytic cleavage which disrupts the DNA-binding part of LexA, leading to derepression of the SOS regulon and eventually DNA repair. The chain is LexA repressor from Erythrobacter litoralis (strain HTCC2594).